Reading from the N-terminus, the 267-residue chain is Probable ribosomal RNA small subunit methyltransferase A (267 aa).

Residues Leu-12, Gly-37, Glu-58, Asp-83, and Asn-100 each contribute to the S-adenosyl-L-methionine site.

Belongs to the class I-like SAM-binding methyltransferase superfamily. rRNA adenine N(6)-methyltransferase family. RsmA subfamily.

The protein localises to the cytoplasm. Its function is as follows. Specifically dimethylates two adjacent adenosines in the loop of a conserved hairpin near the 3'-end of 16S rRNA in the 30S particle. May play a critical role in biogenesis of 30S subunits. This is Probable ribosomal RNA small subunit methyltransferase A from Methanococcus maripaludis (strain DSM 14266 / JCM 13030 / NBRC 101832 / S2 / LL).